The chain runs to 339 residues: ATPase GET3 (339 aa).

34 to 41 (KGGVGKTT) contributes to the ATP binding site. Residue Asp-63 is part of the active site. Residues Glu-244 and Asn-271 each contribute to the ATP site. 2 residues coordinate Zn(2+): Cys-282 and Cys-285.

This sequence belongs to the arsA ATPase family. As to quaternary structure, homodimer.

Its subcellular location is the cytoplasm. It localises to the endoplasmic reticulum. In terms of biological role, ATPase required for the post-translational delivery of tail-anchored (TA) proteins to the endoplasmic reticulum. Recognizes and selectively binds the transmembrane domain of TA proteins in the cytosol. This complex then targets to the endoplasmic reticulum by membrane-bound receptors, where the tail-anchored protein is released for insertion. This process is regulated by ATP binding and hydrolysis. ATP binding drives the homodimer towards the closed dimer state, facilitating recognition of newly synthesized TA membrane proteins. ATP hydrolysis is required for insertion. Subsequently, the homodimer reverts towards the open dimer state, lowering its affinity for the membrane-bound receptor, and returning it to the cytosol to initiate a new round of targeting. The polypeptide is ATPase GET3 (Podospora anserina (strain S / ATCC MYA-4624 / DSM 980 / FGSC 10383) (Pleurage anserina)).